We begin with the raw amino-acid sequence, 189 residues long: Riboflavin kinase (189 aa).

The Mg(2+) site is built by T42 and N44. The active-site Nucleophile is the E124.

The protein belongs to the flavokinase family. Zn(2+) is required as a cofactor. Requires Mg(2+) as cofactor.

It catalyses the reaction riboflavin + ATP = FMN + ADP + H(+). The protein operates within cofactor biosynthesis; FMN biosynthesis; FMN from riboflavin (ATP route): step 1/1. In terms of biological role, catalyzes the phosphorylation of riboflavin (vitamin B2) to form flavin mononucleotide (FMN) coenzyme. This chain is Riboflavin kinase (FMN1), found in Candida glabrata (strain ATCC 2001 / BCRC 20586 / JCM 3761 / NBRC 0622 / NRRL Y-65 / CBS 138) (Yeast).